A 267-amino-acid polypeptide reads, in one-letter code: Non-homologous end joining protein Ku (267 aa).

The Ku domain occupies 11 to 195; sequence AVGQVSCAVA…KVKGEMLELA (185 aa). Residues 229-267 are disordered; the sequence is GRKPKRKAAPKKAREPSDLMAALRESVAATERPRRRKAG.

The protein belongs to the prokaryotic Ku family. In terms of assembly, homodimer. Interacts with LigD.

Its function is as follows. With LigD forms a non-homologous end joining (NHEJ) DNA repair enzyme, which repairs dsDNA breaks with reduced fidelity. Binds linear dsDNA with 5'- and 3'- overhangs but not closed circular dsDNA nor ssDNA. Recruits and stimulates the ligase activity of LigD. The protein is Non-homologous end joining protein Ku of Cereibacter sphaeroides (strain KD131 / KCTC 12085) (Rhodobacter sphaeroides).